The following is a 231-amino-acid chain: NADH-ubiquinone oxidoreductase chain 4 (231 aa).

6 helical membrane passes run 1–21 (PIAG…YGMI), 34–54 (MFMP…LTCL), 63–85 (IAYS…TPWG), 89–111 (AMAL…NTTY), 128–148 (ILPM…AIPP), and 156–176 (FLIM…LGLS).

This sequence belongs to the complex I subunit 4 family.

Its subcellular location is the mitochondrion membrane. The enzyme catalyses a ubiquinone + NADH + 5 H(+)(in) = a ubiquinol + NAD(+) + 4 H(+)(out). In terms of biological role, core subunit of the mitochondrial membrane respiratory chain NADH dehydrogenase (Complex I) that is believed to belong to the minimal assembly required for catalysis. Complex I functions in the transfer of electrons from NADH to the respiratory chain. The immediate electron acceptor for the enzyme is believed to be ubiquinone. This is NADH-ubiquinone oxidoreductase chain 4 (MT-ND4) from Bothriechis schlegelii (Eyelash palm pitviper).